A 229-amino-acid chain; its full sequence is Ribonuclease 3 (229 aa).

The RNase III domain occupies 5–127; that stretch reads LARLERKLGY…LIGAIYLDAD (123 aa). Mg(2+) is bound at residue E40. D44 is a catalytic residue. Mg(2+) is bound by residues D113 and E116. The active site involves E116. The DRBM domain maps to 154–224; the sequence is DPKTRLQEFL…AAAALIALGV (71 aa).

Belongs to the ribonuclease III family. Homodimer. It depends on Mg(2+) as a cofactor.

Its subcellular location is the cytoplasm. It carries out the reaction Endonucleolytic cleavage to 5'-phosphomonoester.. In terms of biological role, digests double-stranded RNA. Involved in the processing of primary rRNA transcript to yield the immediate precursors to the large and small rRNAs (23S and 16S). Processes some mRNAs, and tRNAs when they are encoded in the rRNA operon. Processes pre-crRNA and tracrRNA of type II CRISPR loci if present in the organism. In Pseudomonas putida (strain W619), this protein is Ribonuclease 3.